We begin with the raw amino-acid sequence, 506 residues long: Lysine--tRNA ligase (506 aa).

Mg(2+) is bound by residues glutamate 416 and glutamate 423.

This sequence belongs to the class-II aminoacyl-tRNA synthetase family. As to quaternary structure, homodimer. Mg(2+) is required as a cofactor.

The protein localises to the cytoplasm. It catalyses the reaction tRNA(Lys) + L-lysine + ATP = L-lysyl-tRNA(Lys) + AMP + diphosphate. The chain is Lysine--tRNA ligase from Baumannia cicadellinicola subsp. Homalodisca coagulata.